The following is a 298-amino-acid chain: Elongation factor Ts (298 aa).

Residues 80–83 (TDFV) are involved in Mg(2+) ion dislocation from EF-Tu.

This sequence belongs to the EF-Ts family.

The protein localises to the cytoplasm. In terms of biological role, associates with the EF-Tu.GDP complex and induces the exchange of GDP to GTP. It remains bound to the aminoacyl-tRNA.EF-Tu.GTP complex up to the GTP hydrolysis stage on the ribosome. The polypeptide is Elongation factor Ts (Paracidovorax citrulli (strain AAC00-1) (Acidovorax citrulli)).